Consider the following 873-residue polypeptide: Zinc fingers and homeoboxes protein 1 (873 aa).

The segment at 24 to 63 (LISDLDEGPPVLTPVENTRAESISSDEEVHESVDSDNQQN) is disordered. Thr-36 carries the phosphothreonine modification. A phosphoserine mark is found at Ser-45, Ser-47, and Ser-48. 2 consecutive C2H2-type zinc fingers follow at residues 70–93 (YECKYCTFQTPDLNMFTFHVDSEH) and 102–125 (YVCVECNFLTKRYDALSEHNLKYH). A Glycyl lysine isopeptide (Lys-Gly) (interchain with G-Cter in SUMO2) cross-link involves residue Lys-159. Positions 200-236 (HNSVEDVPEEKENEIKPDREEIVENPSSSASESNTST) are disordered. Ser-202 carries the phosphoserine modification. Residues 212–221 (NEIKPDREEI) are compositionally biased toward basic and acidic residues. Low complexity predominate over residues 223 to 236 (ENPSSSASESNTST). Residues 272–432 (NSNLIPKVLI…QNNIQKSQVP (161 aa)) form a required for dimerization region. A required for interaction with NFYA region spans residues 272–564 (NSNLIPKVLI…AQPKQSWNPF (293 aa)). The homeobox 1 DNA-binding region spans 284 to 346 (NSIPTYNAAL…LKHGVSWTPE (63 aa)). Residues Lys-441, Lys-454, Lys-485, and Lys-629 each participate in a glycyl lysine isopeptide (Lys-Gly) (interchain with G-Cter in SUMO2) cross-link. 2 DNA-binding regions (homeobox) span residues 464-526 (SFGI…KSNQ) and 569-630 (PQKF…EEKM). Disordered stretches follow at residues 626 to 667 (KEEK…ICKK) and 732 to 769 (SSMNGLSSLRKRGRGRPKGRGRGRPRGRPRGSKRINNW). At Ser-648 the chain carries Phosphoserine. A DNA-binding region (homeobox 4) is located at residues 660 to 722 (STGKICKKTP…YAWKNGNLKW (63 aa)). Residues 734 to 768 (MNGLSSLRKRGRGRPKGRGRGRPRGRPRGSKRINN) are required for nuclear localization. The span at 740–764 (LRKRGRGRPKGRGRGRPRGRPRGSK) shows a compositional bias: basic residues. A Phosphoserine modification is found at Ser-774. Positions 777–832 (KFKTGTAILKDYYLKHKFLNEQDLDELVNKSHMGYEQVREWFAERQRRSELGIELF) form a DNA-binding region, homeobox 5. Residues 829–873 (IELFEENEEEDEVIDDQEEDEEETDDSDTWEPPRHVKRKLSKSDD) are disordered. Over residues 831 to 857 (LFEENEEEDEVIDDQEEDEEETDDSDT) the composition is skewed to acidic residues. Residues 831-873 (LFEENEEEDEVIDDQEEDEEETDDSDTWEPPRHVKRKLSKSDD) form a required for repressor activity region. Residues 863-873 (HVKRKLSKSDD) show a composition bias toward basic residues.

Belongs to the ZHX family. As to quaternary structure, forms homodimers. Heterodimer (via HD1 domain) with ZHX2 (via HD1 domain). Also forms a heterodimer with ZHX3 which is a prerequisite for repressor activity. Interacts with ATF7IP and NFYA. Interacts (via homeobox domains) with DNMT3B (via PWWP domain).

Its subcellular location is the nucleus. Acts as a transcriptional repressor. Increases DNMT3B-mediated repressive transcriptional activity when DNMT3B is tethered to DNA. May link molecule between DNMT3B and other co-repressor proteins. The protein is Zinc fingers and homeoboxes protein 1 (ZHX1) of Pan troglodytes (Chimpanzee).